The chain runs to 317 residues: Aspartate carbamoyltransferase catalytic subunit (317 aa).

Carbamoyl phosphate contacts are provided by R66 and T67. K94 is an L-aspartate binding site. Carbamoyl phosphate is bound by residues R116, H144, and Q147. L-aspartate is bound by residues R177 and R231. Carbamoyl phosphate is bound by residues G272 and P273.

Belongs to the aspartate/ornithine carbamoyltransferase superfamily. ATCase family. As to quaternary structure, heterododecamer (2C3:3R2) of six catalytic PyrB chains organized as two trimers (C3), and six regulatory PyrI chains organized as three dimers (R2).

It carries out the reaction carbamoyl phosphate + L-aspartate = N-carbamoyl-L-aspartate + phosphate + H(+). It functions in the pathway pyrimidine metabolism; UMP biosynthesis via de novo pathway; (S)-dihydroorotate from bicarbonate: step 2/3. Its function is as follows. Catalyzes the condensation of carbamoyl phosphate and aspartate to form carbamoyl aspartate and inorganic phosphate, the committed step in the de novo pyrimidine nucleotide biosynthesis pathway. This is Aspartate carbamoyltransferase catalytic subunit from Rhodopseudomonas palustris (strain BisB5).